The primary structure comprises 284 residues: 2-dehydro-3-deoxyphosphooctonate aldolase (284 aa).

The protein belongs to the KdsA family.

Its subcellular location is the cytoplasm. It catalyses the reaction D-arabinose 5-phosphate + phosphoenolpyruvate + H2O = 3-deoxy-alpha-D-manno-2-octulosonate-8-phosphate + phosphate. The protein operates within carbohydrate biosynthesis; 3-deoxy-D-manno-octulosonate biosynthesis; 3-deoxy-D-manno-octulosonate from D-ribulose 5-phosphate: step 2/3. It functions in the pathway bacterial outer membrane biogenesis; lipopolysaccharide biosynthesis. The protein is 2-dehydro-3-deoxyphosphooctonate aldolase of Histophilus somni (strain 2336) (Haemophilus somnus).